A 242-amino-acid polypeptide reads, in one-letter code: 7-cyano-7-deazaguanine synthase (242 aa).

The disordered stretch occupies residues 1-25 (MNSRKDKNSKGKNSDTKRKKSSQEN). 32-42 (LSGGLDSTTCL) provides a ligand contact to ATP. The Zn(2+) site is built by Cys212, Cys221, Cys224, and Cys227.

Belongs to the QueC family. Requires Zn(2+) as cofactor.

It carries out the reaction 7-carboxy-7-deazaguanine + NH4(+) + ATP = 7-cyano-7-deazaguanine + ADP + phosphate + H2O + H(+). It functions in the pathway purine metabolism; 7-cyano-7-deazaguanine biosynthesis. Its function is as follows. Catalyzes the ATP-dependent conversion of 7-carboxy-7-deazaguanine (CDG) to 7-cyano-7-deazaguanine (preQ(0)). This chain is 7-cyano-7-deazaguanine synthase, found in Leptospira borgpetersenii serovar Hardjo-bovis (strain JB197).